A 341-amino-acid chain; its full sequence is Holliday junction branch migration complex subunit RuvB (341 aa).

The segment at 1–182 is large ATPase domain (RuvB-L); sequence MTDADPTLRP…FGIPTRLLFY (182 aa). ATP is bound by residues L21, R22, G63, K66, T67, T68, 129–131, R172, Y182, and R219; that span reads EDF. T67 lines the Mg(2+) pocket. Residues 183–253 are small ATPAse domain (RuvB-S); sequence TVDELFEIVS…LADHALTRLG (71 aa). The interval 256 to 341 is head domain (RuvB-H); sequence QLGLDGADRR…RPPGQSDLFG (86 aa). Positions 292, 311, and 316 each coordinate DNA.

This sequence belongs to the RuvB family. As to quaternary structure, homohexamer. Forms an RuvA(8)-RuvB(12)-Holliday junction (HJ) complex. HJ DNA is sandwiched between 2 RuvA tetramers; dsDNA enters through RuvA and exits via RuvB. An RuvB hexamer assembles on each DNA strand where it exits the tetramer. Each RuvB hexamer is contacted by two RuvA subunits (via domain III) on 2 adjacent RuvB subunits; this complex drives branch migration. In the full resolvosome a probable DNA-RuvA(4)-RuvB(12)-RuvC(2) complex forms which resolves the HJ.

The protein localises to the cytoplasm. The enzyme catalyses ATP + H2O = ADP + phosphate + H(+). In terms of biological role, the RuvA-RuvB-RuvC complex processes Holliday junction (HJ) DNA during genetic recombination and DNA repair, while the RuvA-RuvB complex plays an important role in the rescue of blocked DNA replication forks via replication fork reversal (RFR). RuvA specifically binds to HJ cruciform DNA, conferring on it an open structure. The RuvB hexamer acts as an ATP-dependent pump, pulling dsDNA into and through the RuvAB complex. RuvB forms 2 homohexamers on either side of HJ DNA bound by 1 or 2 RuvA tetramers; 4 subunits per hexamer contact DNA at a time. Coordinated motions by a converter formed by DNA-disengaged RuvB subunits stimulates ATP hydrolysis and nucleotide exchange. Immobilization of the converter enables RuvB to convert the ATP-contained energy into a lever motion, pulling 2 nucleotides of DNA out of the RuvA tetramer per ATP hydrolyzed, thus driving DNA branch migration. The RuvB motors rotate together with the DNA substrate, which together with the progressing nucleotide cycle form the mechanistic basis for DNA recombination by continuous HJ branch migration. Branch migration allows RuvC to scan DNA until it finds its consensus sequence, where it cleaves and resolves cruciform DNA. This Ruegeria pomeroyi (strain ATCC 700808 / DSM 15171 / DSS-3) (Silicibacter pomeroyi) protein is Holliday junction branch migration complex subunit RuvB.